A 295-amino-acid polypeptide reads, in one-letter code: Small ribosomal subunit protein uS2 (295 aa).

Residues 260-295 (KQAKKFSKTKNIDEETNTEFEQALNDADENKNSDNA) are disordered.

The protein belongs to the universal ribosomal protein uS2 family.

The sequence is that of Small ribosomal subunit protein uS2 from Rickettsia felis (strain ATCC VR-1525 / URRWXCal2) (Rickettsia azadi).